The chain runs to 78 residues: Acyl carrier protein (78 aa).

One can recognise a Carrier domain in the interval 2 to 77 (STIEERVKKI…AAIDYVNAHQ (76 aa)). Serine 37 bears the O-(pantetheine 4'-phosphoryl)serine mark.

This sequence belongs to the acyl carrier protein (ACP) family. 4'-phosphopantetheine is transferred from CoA to a specific serine of apo-ACP by AcpS. This modification is essential for activity because fatty acids are bound in thioester linkage to the sulfhydryl of the prosthetic group.

The protein resides in the cytoplasm. The protein operates within lipid metabolism; fatty acid biosynthesis. Functionally, carrier of the growing fatty acid chain in fatty acid biosynthesis. This chain is Acyl carrier protein, found in Pseudomonas entomophila (strain L48).